The sequence spans 416 residues: UV excision repair protein RAD23 homolog B (416 aa).

The region spanning 1 to 79 (MQVTLKTLQQ…VVVMVTKPKA (79 aa)) is the Ubiquitin-like domain. Over residues 83–111 (AVPATTQPSSTPSPTAVSSSPAVAAAQAP) the composition is skewed to low complexity. The segment at 83-175 (AVPATTQPSS…STPGDSSRSN (93 aa)) is disordered. Positions 112–121 (APTPALPPTS) are enriched in pro residues. Residues 122–143 (TPASTAPASTTASSEPAPAGAT) show a composition bias toward low complexity. A Phosphothreonine modification is found at threonine 155. Serine 160 and serine 174 each carry phosphoserine. Position 186 is a phosphothreonine (threonine 186). Positions 188–228 (QSYENMVTEIMSMGYEREQVIAALRASFNNPDRAVEYLLMG) constitute a UBA 1 domain. Phosphoserine is present on serine 199. Tyrosine 202 bears the Phosphotyrosine mark. In terms of domain architecture, STI1 spans 274-317 (HPLEFLRNQPQFQQMRQIIQQNPSLLPALLQQIGRENPQLLQQI). The disordered stretch occupies residues 333 to 356 (QEAGSQGGGGGGGGGGGGGGGGGI). Over residues 337-356 (SQGGGGGGGGGGGGGGGGGI) the composition is skewed to gly residues. The 41-residue stretch at 371 to 411 (PQEKEAIERLKALGFPEGLVIQAYFACEKNENLAANFLLQQ) folds into the UBA 2 domain.

This sequence belongs to the RAD23 family. As to quaternary structure, component of the XPC complex composed of XPC, RAD23B and CETN2. Interacts with NGLY1 and PSMC1. Interacts with ATXN3. Interacts with AMFR. Interacts with VCP; the interaction is indirect and mediated by NGLY1.

It localises to the nucleus. It is found in the cytoplasm. Its function is as follows. Multiubiquitin chain receptor involved in modulation of proteasomal degradation. Binds to polyubiquitin chains. Proposed to be capable to bind simultaneously to the 26S proteasome and to polyubiquitinated substrates and to deliver ubiquitinated proteins to the proteasome. May play a role in endoplasmic reticulum-associated degradation (ERAD) of misfolded glycoproteins by association with PNGase and delivering deglycosylated proteins to the proteasome. Functionally, involved in global genome nucleotide excision repair (GG-NER) by acting as component of the XPC complex. Cooperatively with Cetn2 appears to stabilize Xpc. May protect Xpc from proteasomal degradation. The XPC complex is proposed to represent the first factor bound at the sites of DNA damage and together with other core recognition factors, Xpa, RPA and the TFIIH complex, is part of the pre-incision (or initial recognition) complex. The XPC complex recognizes a wide spectrum of damaged DNA characterized by distortions of the DNA helix such as single-stranded loops, mismatched bubbles or single-stranded overhangs. The orientation of XPC complex binding appears to be crucial for inducing a productive NER. XPC complex is proposed to recognize and to interact with unpaired bases on the undamaged DNA strand which is followed by recruitment of the TFIIH complex and subsequent scanning for lesions in the opposite strand in a 5'-to-3' direction by the NER machinery. Cyclobutane pyrimidine dimers (CPDs) which are formed upon UV-induced DNA damage esacpe detection by the XPC complex due to a low degree of structural perurbation. Instead they are detected by the UV-DDB complex which in turn recruits and cooperates with the XPC complex in the respective DNA repair. In vitro, the Xpc:Rad23b dimer is sufficient to initiate NER; it preferentially binds to cisplatin and UV-damaged double-stranded DNA and also binds to a variety of chemically and structurally diverse DNA adducts. Xpc:Rad23b contacts DNA both 5' and 3' of a cisplatin lesion with a preference for the 5' side. Xpc:Rad23bB induces a bend in DNA upon binding. Xpc:Rad23b stimulates the activity of DNA glycosylases Tdg and Smug1. In Mus musculus (Mouse), this protein is UV excision repair protein RAD23 homolog B (Rad23b).